Consider the following 56-residue polypeptide: Potassium channel toxin alpha-KTx 9.1 (56 aa).

The first 28 residues, 1-28 (MSRLFTLVLIVLAMNVMMAIISDPVVEA), serve as a signal peptide directing secretion. 3 disulfide bridges follow: Cys-31-Cys-47, Cys-34-Cys-52, and Cys-38-Cys-54.

Expressed by the venom gland.

Its subcellular location is the secreted. Blocks small conductance calcium-activated potassium channels (KCNN, SK). Weakly inhibits the Kv7.1/KCNQ1 channel (10 uM of the toxin inhibits currents by 23.3%). Low toxicity by intracerebroventricular injection into mice. In Olivierus martensii (Manchurian scorpion), this protein is Potassium channel toxin alpha-KTx 9.1.